The following is a 303-amino-acid chain: Methionyl-tRNA formyltransferase (303 aa).

Position 108–111 (108–111 (SDLP)) interacts with (6S)-5,6,7,8-tetrahydrofolate.

This sequence belongs to the Fmt family.

It catalyses the reaction L-methionyl-tRNA(fMet) + (6R)-10-formyltetrahydrofolate = N-formyl-L-methionyl-tRNA(fMet) + (6S)-5,6,7,8-tetrahydrofolate + H(+). In terms of biological role, attaches a formyl group to the free amino group of methionyl-tRNA(fMet). The formyl group appears to play a dual role in the initiator identity of N-formylmethionyl-tRNA by promoting its recognition by IF2 and preventing the misappropriation of this tRNA by the elongation apparatus. This Rickettsia peacockii (strain Rustic) protein is Methionyl-tRNA formyltransferase.